A 465-amino-acid polypeptide reads, in one-letter code: Exoenzymes regulatory protein AepA (465 aa).

The first 21 residues, 1–21, serve as a signal peptide directing secretion; sequence MKFNVKMLSVTLGLFTSHAFA.

Belongs to the metallo-dependent hydrolases superfamily.

Its function is as follows. Involved in the control of extracellular enzymes production. Stimulates PEL, PEH, CEL, and PRT production. The chain is Exoenzymes regulatory protein AepA (aepA) from Pectobacterium carotovorum subsp. carotovorum (Erwinia carotovora subsp. carotovora).